The sequence spans 227 residues: 7-cyano-7-deazaguanine synthase (227 aa).

Residue 16 to 26 (FSGGQDSTTCL) coordinates ATP. Residues C194, C202, C205, and C208 each contribute to the Zn(2+) site.

Belongs to the QueC family. Zn(2+) is required as a cofactor.

The enzyme catalyses 7-carboxy-7-deazaguanine + NH4(+) + ATP = 7-cyano-7-deazaguanine + ADP + phosphate + H2O + H(+). The protein operates within purine metabolism; 7-cyano-7-deazaguanine biosynthesis. In terms of biological role, catalyzes the ATP-dependent conversion of 7-carboxy-7-deazaguanine (CDG) to 7-cyano-7-deazaguanine (preQ(0)). This chain is 7-cyano-7-deazaguanine synthase, found in Haemophilus influenzae (strain 86-028NP).